Consider the following 299-residue polypeptide: Taste receptor type 2 member 4 (299 aa).

The Extracellular portion of the chain corresponds to methionine 1 to alanine 9. A helical membrane pass occupies residues isoleucine 10–valine 30. Topologically, residues asparagine 31 to arginine 46 are cytoplasmic. A helical transmembrane segment spans residues isoleucine 47–isoleucine 67. Over tyrosine 68 to serine 81 the chain is Extracellular. Residues alanine 82–leucine 102 form a helical membrane-spanning segment. The Cytoplasmic portion of the chain corresponds to asparagine 103 to arginine 131. Residues leucine 132–glutamine 152 traverse the membrane as a helical segment. Residues alanine 153–glutamate 172 are Extracellular-facing. N-linked (GlcNAc...) asparagine glycans are attached at residues asparagine 164, asparagine 165, and asparagine 169. Residues glycine 173–valine 193 traverse the membrane as a helical segment. Residues threonine 194 to lysine 230 lie on the Cytoplasmic side of the membrane. The helical transmembrane segment at leucine 231–leucine 251 threads the bilayer. Topologically, residues proline 252 to lysine 262 are extracellular. A helical membrane pass occupies residues serine 263 to threonine 283. Residues histidine 284–lysine 299 are Cytoplasmic-facing.

This sequence belongs to the G-protein coupled receptor T2R family.

The protein localises to the membrane. The protein resides in the cell projection. It localises to the cilium membrane. Functionally, gustducin-coupled receptor implicated in the perception of bitter compounds in the oral cavity and the gastrointestinal tract. Signals through PLCB2 and the calcium-regulated cation channel TRPM5. In airway epithelial cells, binding of denatonium increases the intracellular calcium ion concentration and stimulates ciliary beat frequency. The sequence is that of Taste receptor type 2 member 4 (TAS2R4) from Papio hamadryas (Hamadryas baboon).